Reading from the N-terminus, the 209-residue chain is Ribosomal RNA large subunit methyltransferase E (209 aa).

S-adenosyl-L-methionine is bound by residues G63, W65, D83, D99, and D124. The active-site Proton acceptor is K164.

Belongs to the class I-like SAM-binding methyltransferase superfamily. RNA methyltransferase RlmE family.

The protein resides in the cytoplasm. It carries out the reaction uridine(2552) in 23S rRNA + S-adenosyl-L-methionine = 2'-O-methyluridine(2552) in 23S rRNA + S-adenosyl-L-homocysteine + H(+). Functionally, specifically methylates the uridine in position 2552 of 23S rRNA at the 2'-O position of the ribose in the fully assembled 50S ribosomal subunit. In Shewanella loihica (strain ATCC BAA-1088 / PV-4), this protein is Ribosomal RNA large subunit methyltransferase E.